The primary structure comprises 121 residues: Acid shock protein (121 aa).

The first 21 residues, 1 to 21 (MKKVLALMVAATLGLSSVAFA), serve as a signal peptide directing secretion. Residues 22 to 63 (ADTTATATPAATSTTATVAAQTKATQHQKHKVTKKTTEQKAQ) constitute a propeptide that is removed on maturation. A disordered region spans residues 40 to 121 (AAQTKATQHQ…AKKPVAAPAA (82 aa)). Basic residues predominate over residues 84–93 (AAKKHVKKAS). The span at 94–103 (VQKAPVQKAQ) shows a compositional bias: low complexity. Basic residues predominate over residues 104-113 (AAKKHHKTAK).

It belongs to the Asr family. In terms of processing, proteolytic processing gives rise to the active protein.

The protein resides in the periplasm. Functionally, required for growth and/or survival at acidic conditions. This chain is Acid shock protein, found in Yersinia pestis bv. Antiqua (strain Antiqua).